Reading from the N-terminus, the 325-residue chain is NADH-quinone oxidoreductase subunit H (325 aa).

9 helical membrane-spanning segments follow: residues 11–31 (ILLSILKAVVILLVVVTCGAF), 50–69 (NRVGWGGSLQLVADMIKMFF), 81–101 (VIFTLAPMIAFTSLLLAFAIV), 114–134 (IGILFFLMMAGLAVYAVLFAG), 154–174 (LSYEVFLGLSLMGVVAQAGSF), 186–206 (IWNVIPQFFGFVTFAIAGVAV), 237–257 (FFVGEYIGIVTISALMVTLFF), 265–285 (LPPFIWFALKTAFFMMMFILI), and 304–324 (VCLPLTLINLLVTAAVILWQA).

Belongs to the complex I subunit 1 family. NDH-1 is composed of 13 different subunits. Subunits NuoA, H, J, K, L, M, N constitute the membrane sector of the complex.

Its subcellular location is the cell inner membrane. The catalysed reaction is a quinone + NADH + 5 H(+)(in) = a quinol + NAD(+) + 4 H(+)(out). In terms of biological role, NDH-1 shuttles electrons from NADH, via FMN and iron-sulfur (Fe-S) centers, to quinones in the respiratory chain. The immediate electron acceptor for the enzyme in this species is believed to be ubiquinone. Couples the redox reaction to proton translocation (for every two electrons transferred, four hydrogen ions are translocated across the cytoplasmic membrane), and thus conserves the redox energy in a proton gradient. This subunit may bind ubiquinone. This is NADH-quinone oxidoreductase subunit H from Citrobacter koseri (strain ATCC BAA-895 / CDC 4225-83 / SGSC4696).